The primary structure comprises 543 residues: Glucose-6-phosphate isomerase (543 aa).

Residue E353 is the Proton donor of the active site. Active-site residues include H384 and K512.

Belongs to the GPI family.

Its subcellular location is the cytoplasm. The enzyme catalyses alpha-D-glucose 6-phosphate = beta-D-fructose 6-phosphate. Its pathway is carbohydrate biosynthesis; gluconeogenesis. It participates in carbohydrate degradation; glycolysis; D-glyceraldehyde 3-phosphate and glycerone phosphate from D-glucose: step 2/4. In terms of biological role, catalyzes the reversible isomerization of glucose-6-phosphate to fructose-6-phosphate. This Christiangramia forsetii (strain DSM 17595 / CGMCC 1.15422 / KT0803) (Gramella forsetii) protein is Glucose-6-phosphate isomerase.